The following is a 287-amino-acid chain: Pol-RFamide neuropeptides (287 aa).

Positions 1–21 (MNLITLLVLGVSTCLIYGIEA) are cleaved as a signal peptide. The propeptide occupies 22 to 52 (DEKTSSALENEIVEILNGNFKNEKKSIETSD). Gln53 bears the Pyrrolidone carboxylic acid mark. Phe59 is subject to Phenylalanine amide. Residues 62-64 (EVN) constitute a propeptide that is removed on maturation. A Pyrrolidone carboxylic acid modification is found at Gln65. A Phenylalanine amide modification is found at Phe71. The propeptide occupies 74-77 (ELSD). Position 78 is a pyrrolidone carboxylic acid (Gln78). Phe84 is modified (phenylalanine amide). Positions 87 to 90 (ELSD) are excised as a propeptide. Pyrrolidone carboxylic acid is present on Gln91. Phe97 carries the post-translational modification Phenylalanine amide. Residues 100–103 (EVLD) constitute a propeptide that is removed on maturation. Pyrrolidone carboxylic acid is present on Gln104. The residue at position 110 (Phe110) is a Phenylalanine amide. A propeptide spanning residues 113-116 (DASN) is cleaved from the precursor. The residue at position 117 (Gln117) is a Pyrrolidone carboxylic acid. A Phenylalanine amide modification is found at Phe123. Positions 126-129 (ELSD) are excised as a propeptide. Gln130 carries the pyrrolidone carboxylic acid modification. Position 136 is a phenylalanine amide (Phe136). Residues 139–142 (EGSN) constitute a propeptide that is removed on maturation. Pyrrolidone carboxylic acid is present on Gln143. The residue at position 149 (Phe149) is a Phenylalanine amide. A propeptide spanning residues 152–168 (EASKNDLEKQNGRGDSD) is cleaved from the precursor. Pyrrolidone carboxylic acid is present on Gln169. Position 175 is a phenylalanine amide (Phe175). A propeptide spanning residues 178-181 (EARK) is cleaved from the precursor. Gln182 is modified (pyrrolidone carboxylic acid). At Phe188 the chain carries Phenylalanine amide. A propeptide spanning residues 192–194 (DMN) is cleaved from the precursor. Gln195 is modified (pyrrolidone carboxylic acid). His201 carries the post-translational modification Histidine amide. The propeptide occupies 204 to 207 (ETSD). Gln208 is subject to Pyrrolidone carboxylic acid. At Phe214 the chain carries Phenylalanine amide. Positions 217 to 220 (QLSD) are excised as a propeptide. At Gln221 the chain carries Pyrrolidone carboxylic acid. The residue at position 227 (Phe227) is a Phenylalanine amide. Residues 229–267 (REVKNDKNNPFRSRYTGDSTQLQRENNQPIEELRDNTEK) are disordered. A propeptide spanning residues 230 to 287 (EVKNDKNNPFRSRYTGDSTQLQRENNQPIEELRDNTEKVSIENKPIMKKTSVKISKTV) is cleaved from the precursor. Polar residues predominate over residues 238–257 (PFRSRYTGDSTQLQRENNQP).

The protein belongs to the FARP (FMRFamide related peptide) family. The N-terminal processing sites of the Pol-RFamide peptides are acidic suggesting that cniderian nervous systems may use a variety of unconventional processing procedures.

The protein resides in the secreted. In terms of biological role, has direct action on motoneurons, and effect includes transient inhibition followed by prolonged excitation. This Polyorchis penicillatus (Hydromedusa) protein is Pol-RFamide neuropeptides.